A 525-amino-acid chain; its full sequence is BTB/POZ domain-containing protein At1g50280 (525 aa).

In terms of domain architecture, BTB spans 5–79 (NDLKINLNGQ…CYHNGEILID (75 aa)). The NPH3 domain maps to 200–466 (EWWFEDMTNL…IEALKSRCGN (267 aa)).

Belongs to the NPH3 family.

It functions in the pathway protein modification; protein ubiquitination. Functionally, may act as a substrate-specific adapter of an E3 ubiquitin-protein ligase complex (CUL3-RBX1-BTB) which mediates the ubiquitination and subsequent proteasomal degradation of target proteins. This is BTB/POZ domain-containing protein At1g50280 from Arabidopsis thaliana (Mouse-ear cress).